Here is a 103-residue protein sequence, read N- to C-terminus: Eukaryotic translation initiation factor 4E-1A-binding protein homolog (103 aa).

The disordered stretch occupies residues 49–103 (NSPLSKTPPPQLAHITNTELNKKVEKSTTTPTTTTPPTTTAKPKPTNDDDIFPME). Residues 76–92 (TTTPTTTTPPTTTAKPK) are compositionally biased toward low complexity.

This sequence belongs to the eIF4E-binding protein family.

In terms of biological role, regulates assembly of the eIF4F complex. This Dictyostelium discoideum (Social amoeba) protein is Eukaryotic translation initiation factor 4E-1A-binding protein homolog (febA).